Here is a 708-residue protein sequence, read N- to C-terminus: MARDLQNHLLFEVATEVTNRVGGIYSVLKSKAPVTVAQYGDNYTLLGPLNKATYESEVEKLDWEDESIFPEELLPIQKTLMSMREKGVNFVYGNWLIEGAPRVILFELDSVRHFLNEWKADLWSLVGIPSPEHDHETNDAILLGYVVVWFLGEVSKLDSSHAIIGHFHEWLAGVALPLCRKKRIDVVTIFTTHATLLGRYLCAAGDVDFYNNLQYFDVDQEAGKRGIYHRYCIERAAAHTADVFTTVSQITALEAEHLLKRKPDGILPNGLNVVKFQAVHEFQNLHALKKDKINDFVRGHFHGCFDFDLDNTVYFFIAGRYEYKNKGADMFIESLARLNYRLKVSGSKKTVVAFLIMPAKTNSFTVEALKSQAIVKSLENTVNEVTASIGKRIFEHTMRYPHNGLESELPTNLDELLKSSEKVLLKKRVLALRRPYGELPPVVTHNMCDDANDPILNQIRHVRLFNDSSDRVKVIFHPEFLNANNPILGLDYDEFVRGCHLGVFPSYYEPWGYTPAECTVMGVPSITTNVSGFGAYMEDLIETDQAKDYGIYIVDRRFKSPDESVEQLADYMEEFVNKTRRQRINQRNRTERLSDLLDWKRMGLEYVKARQLGLRRAYPEQFKQLVGETISDANMNTLAGGKKFKIARPLSVPGSPKVRSNSTVYMTPGDLGTLQDANNADDYFNLSTNGAIDNDDDDNDTSAYYEDN.

Position 20 (arginine 20) interacts with UDP. The residue at position 159 (serine 159) is a Phosphoserine. Residues histidine 193 and arginine 199 each coordinate UDP-alpha-D-glucose. Residues histidine 280, glutamate 281, glutamine 283, histidine 286, and lysine 290 each contribute to the alpha-D-glucose 6-phosphate site. Residue arginine 320 coordinates UDP. UDP-alpha-D-glucose is bound at residue arginine 320. Phosphoserine is present on serine 363. Histidine 500 serves as a coordination point for alpha-D-glucose 6-phosphate. Positions 509, 511, and 512 each coordinate UDP-alpha-D-glucose. UDP is bound at residue threonine 514. Serine 560 bears the Phosphoserine mark. Alpha-D-glucose 6-phosphate-binding residues include arginine 583 and arginine 587. Serine 651 and serine 655 each carry phosphoserine. Residues serine 660 and serine 662 each carry the phosphoserine; by PKA modification. Residues 687 to 708 are disordered; it reads STNGAIDNDDDDNDTSAYYEDN. Residues 693-708 show a composition bias toward acidic residues; the sequence is DNDDDDNDTSAYYEDN.

It belongs to the glycosyltransferase 3 family.

It carries out the reaction [(1-&gt;4)-alpha-D-glucosyl](n) + UDP-alpha-D-glucose = [(1-&gt;4)-alpha-D-glucosyl](n+1) + UDP + H(+). It functions in the pathway glycan biosynthesis; glycogen biosynthesis. Its activity is regulated as follows. Allosteric activation by glucose-6-phosphate, and phosphorylation by a cAMP-dependent kinase. Glycogen synthase participates in the glycogen biosynthetic process along with glycogenin and glycogen branching enzyme. Extends the primer composed of a few glucose units formed by glycogenin by adding new glucose units to it. In this context, glycogen synthase transfers the glycosyl residue from UDP-Glc to the non-reducing end of alpha-1,4-glucan. The chain is Glycogen [starch] synthase isoform 1 (GSY1) from Saccharomyces cerevisiae (strain ATCC 204508 / S288c) (Baker's yeast).